The following is a 2060-amino-acid chain: Unconventional myosin-X (2060 aa).

At Met1 the chain carries N-acetylmethionine. The 677-residue stretch at 63 to 739 (EGVDDMASLT…LEQKLEKRRE (677 aa)) folds into the Myosin motor domain. Residues Asn104, Tyr113, 160 to 165 (GAGKTE), and Asn215 contribute to the ATP site. The interval 619–641 (LHSLMATLSSSNPFFVRCIKPNT) is actin-binding. IQ domains are found at residues 742-771 (IDRA…GVVT), 765-794 (VLCG…AAIV), and 788-817 (LKKA…EKRE). An SAH region spans residues 814-882 (EKRELEERKR…LTRELEKQRE (69 aa)). The stretch at 883-933 (NKQVEEILRLEKEIEDLQRMKEQQELSLTEASLQKLQQLRDEELRRLEDEA) forms a coiled coil. A phosphoserine mark is found at Ser961, Ser964, and Ser967. Disordered regions lie at residues 971-1039 (SELA…PYMN) and 1064-1088 (SLHN…PSPD). Residues 991–1005 (PEEEVDEGFEADDDA) are compositionally biased toward acidic residues. The segment covering 1064 to 1083 (SLHNSSSGESTYCMPQNNGD) has biased composition (polar residues). Thr1160 is subject to Phosphothreonine. 2 PH domains span residues 1214–1312 (EALK…QVHS) and 1394–1499 (EFIV…NVTD). One can recognise a MyTH4 domain in the interval 1549 to 1697 (LPYGDINLNL…PSRDEIEALI (149 aa)). The FERM domain occupies 1702-2046 (MTSTVYCHGG…AYISMIVKKR (345 aa)).

Belongs to the TRAFAC class myosin-kinesin ATPase superfamily. Myosin family. In terms of assembly, monomer, when in an inactive conformation in the cytosol. Homodimer in its active, membrane-bound conformation; antiparallel coiled coil-mediated dimer formation. Interacts with ECPAS. Interacts with DCC and ITGB5; the presence of DCC inhibits ITGB5 binding. Interacts with tubulin; ITGB5 or DCC binding inhibits tubulin binding. Interacts strongly with CALM3 and weakly with CALM, the CALM3 interaction is essential for function in filopodial extension and motility. Interacts with ITGB1, ITGB3 and ITGB5. Interacts with NEO1. Interacts with VASP.

The protein localises to the cytoplasm. It localises to the cytosol. It is found in the cell projection. Its subcellular location is the lamellipodium. The protein resides in the ruffle. The protein localises to the cytoskeleton. It localises to the filopodium tip. It is found in the cell cortex. Its subcellular location is the filopodium membrane. The protein resides in the cell membrane. Its function is as follows. Myosins are actin-based motor molecules with ATPase activity. Unconventional myosins serve in intracellular movements. MYO10 binds to actin filaments and actin bundles and functions as a plus end-directed motor. Moves with higher velocity and takes larger steps on actin bundles than on single actin filaments. The tail domain binds to membranous compartments containing phosphatidylinositol 3,4,5-trisphosphate or integrins, and mediates cargo transport along actin filaments. Regulates cell shape, cell spreading and cell adhesion. Stimulates the formation and elongation of filopodia. In hippocampal neurons it induces the formation of dendritic filopodia by trafficking the actin-remodeling protein VASP to the tips of filopodia, where it promotes actin elongation. Plays a role in formation of the podosome belt in osteoclasts. This is Unconventional myosin-X (Myo10) from Rattus norvegicus (Rat).